The following is a 387-amino-acid chain: Probable multidrug resistance protein EmrK (387 aa).

The Cytoplasmic segment spans residues 1-16 (MEQINSNKKHSNRRKY). Residues 17-37 (FSLLAVVLFIAFSGAYAYWSM) traverse the membrane as a helical segment. The Periplasmic segment spans residues 38–387 (ELEDMISTDD…SNIISHNGQL (350 aa)).

The protein belongs to the membrane fusion protein (MFP) (TC 8.A.1) family. Part of the tripartite efflux system EmrYK-TolC, which is composed of an inner membrane transporter, EmrY, a membrane fusion protein, EmrK, and an outer membrane component, TolC. The complex forms a large protein conduit and can translocate molecules across both the inner and outer membranes.

It localises to the cell inner membrane. Part of the tripartite efflux system EmrYK-TolC, which confers resistance to various drugs. The chain is Probable multidrug resistance protein EmrK (emrK) from Escherichia coli (strain K12).